Consider the following 600-residue polypeptide: Glutamine--fructose-6-phosphate aminotransferase [isomerizing] (600 aa).

Cys-2 acts as the Nucleophile; for GATase activity in catalysis. The Glutamine amidotransferase type-2 domain occupies 2-217 (CGIVGYIGQL…DKEMVIVTDD (216 aa)). SIS domains lie at 283–422 (IAAA…KNGI) and 452–590 (IARE…VDKP). Catalysis depends on Lys-595, which acts as the For Fru-6P isomerization activity.

In terms of assembly, homodimer.

Its subcellular location is the cytoplasm. It catalyses the reaction D-fructose 6-phosphate + L-glutamine = D-glucosamine 6-phosphate + L-glutamate. Functionally, catalyzes the first step in hexosamine metabolism, converting fructose-6P into glucosamine-6P using glutamine as a nitrogen source. In Bacillus subtilis (strain 168), this protein is Glutamine--fructose-6-phosphate aminotransferase [isomerizing].